The following is a 251-amino-acid chain: Small ribosomal subunit protein uS2 (251 aa).

An N-acetylserine modification is found at Ser2. The interval Glu209–Trp251 is disordered. Residues Ala218–Glu237 show a composition bias toward acidic residues. Low complexity predominate over residues Ala238–Trp251.

This sequence belongs to the universal ribosomal protein uS2 family. Component of the small ribosomal subunit. Mature ribosomes consist of a small (40S) and a large (60S) subunit. The 40S subunit contains about 33 different proteins and 1 molecule of RNA (18S). The 60S subunit contains about 49 different proteins and 3 molecules of RNA (25S, 5.8S and 5S). Interacts with RPS21.

The protein resides in the cytoplasm. Functionally, required for the assembly and/or stability of the 40S ribosomal subunit. Required for the processing of the 20S rRNA-precursor to mature 18S rRNA in a late step of the maturation of 40S ribosomal subunits. The polypeptide is Small ribosomal subunit protein uS2 (Candida glabrata (strain ATCC 2001 / BCRC 20586 / JCM 3761 / NBRC 0622 / NRRL Y-65 / CBS 138) (Yeast)).